We begin with the raw amino-acid sequence, 422 residues long: Histidine--tRNA ligase (422 aa).

This sequence belongs to the class-II aminoacyl-tRNA synthetase family. In terms of assembly, homodimer.

Its subcellular location is the cytoplasm. The enzyme catalyses tRNA(His) + L-histidine + ATP = L-histidyl-tRNA(His) + AMP + diphosphate + H(+). The polypeptide is Histidine--tRNA ligase (hisS) (Photobacterium profundum (strain SS9)).